A 183-amino-acid chain; its full sequence is Probable chemoreceptor glutamine deamidase CheD (183 aa).

The protein belongs to the CheD family.

The catalysed reaction is L-glutaminyl-[protein] + H2O = L-glutamyl-[protein] + NH4(+). Its function is as follows. Probably deamidates glutamine residues to glutamate on methyl-accepting chemotaxis receptors (MCPs), playing an important role in chemotaxis. The protein is Probable chemoreceptor glutamine deamidase CheD of Sinorhizobium medicae (strain WSM419) (Ensifer medicae).